Here is a 235-residue protein sequence, read N- to C-terminus: MTDLTEKNTALEEEKIESAVENQQKSIWKEIFAQGIWKNNPAVVQLLGLCPLLAVSSTATNALGLSLATMLVLTCTNTVISLFRQYIPKEIRIPIYVMIIATTVTAVQLLMNAYTYTLYQSLGIFIPLIVTNCIIIGRAEAFASKNSLLHSIWDGFSMGLGMALSLTILGALREIIGQGTIFEGIENLFGEQAKFLTHHIYHTDSSFLLFILPPGAFIGLGLLLAIKNRIDNVKK.

5 helical membrane-spanning segments follow: residues 63 to 83 (LGLS…ISLF), 93 to 113 (IPIY…LMNA), 117 to 137 (TLYQ…IIIG), 152 to 172 (IWDG…LGAL), and 206 to 226 (SFLL…LLAI).

This sequence belongs to the NqrDE/RnfAE family. As to quaternary structure, the complex is composed of six subunits: RnfA, RnfB, RnfC, RnfD, RnfE and RnfG.

Its subcellular location is the cell inner membrane. Functionally, part of a membrane-bound complex that couples electron transfer with translocation of ions across the membrane. The sequence is that of Ion-translocating oxidoreductase complex subunit E from Haemophilus influenzae (strain PittEE).